A 130-amino-acid polypeptide reads, in one-letter code: Small ribosomal subunit protein uS8 (130 aa).

The protein belongs to the universal ribosomal protein uS8 family. Part of the 30S ribosomal subunit. Contacts proteins S5 and S12.

Its function is as follows. One of the primary rRNA binding proteins, it binds directly to 16S rRNA central domain where it helps coordinate assembly of the platform of the 30S subunit. The protein is Small ribosomal subunit protein uS8 of Cronobacter sakazakii (strain ATCC BAA-894) (Enterobacter sakazakii).